The following is a 792-amino-acid chain: LPS-assembly protein LptD (792 aa).

An N-terminal signal peptide occupies residues 1-22; it reads MYRVLRLLPLPLSVAISLSALA.

Belongs to the LptD family. As to quaternary structure, component of the lipopolysaccharide transport and assembly complex. Interacts with LptE and LptA.

The protein resides in the cell outer membrane. Together with LptE, is involved in the assembly of lipopolysaccharide (LPS) at the surface of the outer membrane. The chain is LPS-assembly protein LptD from Xylella fastidiosa (strain Temecula1 / ATCC 700964).